The chain runs to 254 residues: Anti-sigma-M factor RsmA (254 aa).

Residues 1-112 (MSAADKDPDK…AARPHVHPVR (112 aa)) are Cytoplasmic-facing. Residues 113–133 (MIAGAAGLCAVATAIGVGAVV) form a helical membrane-spanning segment. Residues 134 to 254 (DAPPPAPSAP…LLASTVVPRA (121 aa)) lie on the Extracellular side of the membrane.

Interacts with ECF RNA polymerase sigma factor SigM; this should inhibit the interaction of SigM with the RNA polymerase catalytic core. Post-translationally, probably cleaved within the membrane by Rip1 near the cytoplasmic membrane interface.

The protein resides in the cell membrane. An anti-sigma factor for extracytoplasmic function (ECF) sigma factor SigM. ECF sigma factors are held in an inactive form by an anti-sigma factor until released by regulated intramembrane proteolysis (RIP). RIP occurs when an extracytoplasmic signal triggers a concerted proteolytic cascade to transmit information and elicit cellular responses. The membrane-spanning regulatory substrate protein is first cut extracytoplasmically (site-1 protease, S1P), then within the membrane itself (site-2 protease, S2P, Rip1), while cytoplasmic proteases finish degrading the regulatory protein, liberating the sigma factor. This is Anti-sigma-M factor RsmA (rsmA) from Mycobacterium tuberculosis (strain ATCC 35801 / TMC 107 / Erdman).